The following is a 242-amino-acid chain: Protein GrpE (242 aa).

2 disordered regions span residues 1–75 (MSDD…DDEL) and 93–136 (VADL…QQIK). Residues 23–37 (DAESSAAEDASAADD) are compositionally biased toward low complexity. The span at 38–49 (AAPEESTGDEQA) shows a compositional bias: acidic residues. Residues 50–64 (GETTAESSDAESVTV) are compositionally biased toward polar residues. Positions 96–108 (LETERDEAEETAS) are enriched in acidic residues. Over residues 124 to 133 (YKKRAKKRQQ) the composition is skewed to basic residues.

This sequence belongs to the GrpE family. As to quaternary structure, homodimer.

The protein localises to the cytoplasm. Functionally, participates actively in the response to hyperosmotic and heat shock by preventing the aggregation of stress-denatured proteins, in association with DnaK and GrpE. It is the nucleotide exchange factor for DnaK and may function as a thermosensor. Unfolded proteins bind initially to DnaJ; upon interaction with the DnaJ-bound protein, DnaK hydrolyzes its bound ATP, resulting in the formation of a stable complex. GrpE releases ADP from DnaK; ATP binding to DnaK triggers the release of the substrate protein, thus completing the reaction cycle. Several rounds of ATP-dependent interactions between DnaJ, DnaK and GrpE are required for fully efficient folding. The sequence is that of Protein GrpE from Haloferax mediterranei (strain ATCC 33500 / DSM 1411 / JCM 8866 / NBRC 14739 / NCIMB 2177 / R-4) (Halobacterium mediterranei).